A 216-amino-acid polypeptide reads, in one-letter code: Probable nicotinate-nucleotide adenylyltransferase (216 aa).

Belongs to the NadD family.

The enzyme catalyses nicotinate beta-D-ribonucleotide + ATP + H(+) = deamido-NAD(+) + diphosphate. Its pathway is cofactor biosynthesis; NAD(+) biosynthesis; deamido-NAD(+) from nicotinate D-ribonucleotide: step 1/1. Functionally, catalyzes the reversible adenylation of nicotinate mononucleotide (NaMN) to nicotinic acid adenine dinucleotide (NaAD). The chain is Probable nicotinate-nucleotide adenylyltransferase from Marinobacter nauticus (strain ATCC 700491 / DSM 11845 / VT8) (Marinobacter aquaeolei).